The primary structure comprises 492 residues: MO25-like protein 3 (492 aa).

The segment at 442–492 is disordered; sequence SRAGIRFGETRNVKGSPRSRSQSPRPPTGPEPSPRTTSYQNVRFPPEDSSR. Residues 465–474 are compositionally biased toward pro residues; that stretch reads PRPPTGPEPS.

It belongs to the Mo25 family.

This is MO25-like protein 3 from Caenorhabditis briggsae.